The sequence spans 397 residues: Xylose isomerase (397 aa).

Catalysis depends on residues histidine 54 and aspartate 57. Mg(2+)-binding residues include glutamate 181, glutamate 217, histidine 220, aspartate 245, aspartate 255, aspartate 257, and aspartate 293.

Belongs to the xylose isomerase family. Homotetramer. The cofactor is Mg(2+).

It localises to the cytoplasm. The enzyme catalyses alpha-D-xylose = alpha-D-xylulofuranose. The chain is Xylose isomerase from Clavibacter michiganensis subsp. michiganensis (strain NCPPB 382).